The sequence spans 261 residues: Tryptophan synthase alpha chain (261 aa).

Residues glutamate 47 and aspartate 58 each act as proton acceptor in the active site.

This sequence belongs to the TrpA family. As to quaternary structure, tetramer of two alpha and two beta chains.

The catalysed reaction is (1S,2R)-1-C-(indol-3-yl)glycerol 3-phosphate + L-serine = D-glyceraldehyde 3-phosphate + L-tryptophan + H2O. Its pathway is amino-acid biosynthesis; L-tryptophan biosynthesis; L-tryptophan from chorismate: step 5/5. Functionally, the alpha subunit is responsible for the aldol cleavage of indoleglycerol phosphate to indole and glyceraldehyde 3-phosphate. The sequence is that of Tryptophan synthase alpha chain from Neisseria meningitidis serogroup A / serotype 4A (strain DSM 15465 / Z2491).